Reading from the N-terminus, the 346-residue chain is Ketol-acid reductoisomerase (NADP(+)) (346 aa).

Positions 1-141 (KKNSILKKNQ…GAHHAGVLES (141 aa)) constitute a KARI N-terminal Rossmann domain. NADP(+)-binding positions include Ser-11 and 41-43 (DKQ). His-65 is a catalytic residue. Gly-91 contributes to the NADP(+) binding site. 2 KARI C-terminal knotted domains span residues 142-286 (SFVA…PEQE) and 287-346 (YYDH…NKVI). Mg(2+) is bound by residues Asp-150, Glu-154, Glu-322, and Glu-326.

This sequence belongs to the ketol-acid reductoisomerase family. Requires Mg(2+) as cofactor.

It catalyses the reaction (2R)-2,3-dihydroxy-3-methylbutanoate + NADP(+) = (2S)-2-acetolactate + NADPH + H(+). It carries out the reaction (2R,3R)-2,3-dihydroxy-3-methylpentanoate + NADP(+) = (S)-2-ethyl-2-hydroxy-3-oxobutanoate + NADPH + H(+). It participates in amino-acid biosynthesis; L-isoleucine biosynthesis; L-isoleucine from 2-oxobutanoate: step 2/4. Its pathway is amino-acid biosynthesis; L-valine biosynthesis; L-valine from pyruvate: step 2/4. Its function is as follows. Involved in the biosynthesis of branched-chain amino acids (BCAA). Catalyzes an alkyl-migration followed by a ketol-acid reduction of (S)-2-acetolactate (S2AL) to yield (R)-2,3-dihydroxy-isovalerate. In the isomerase reaction, S2AL is rearranged via a Mg-dependent methyl migration to produce 3-hydroxy-3-methyl-2-ketobutyrate (HMKB). In the reductase reaction, this 2-ketoacid undergoes a metal-dependent reduction by NADPH to yield (R)-2,3-dihydroxy-isovalerate. The chain is Ketol-acid reductoisomerase (NADP(+)) (ilvC) from Buchnera aphidicola subsp. Uroleucon rurale.